The following is a 270-amino-acid chain: Putative ABC transporter ATP-binding protein MG304 (270 aa).

Positions 1 to 232 (MLQVKNLSFK…LDLFHNHHFN (232 aa)) constitute an ABC transporter domain. Position 36 to 43 (36 to 43 (GHNGSGKS)) interacts with ATP.

The protein belongs to the ABC transporter superfamily.

This Mycoplasma genitalium (strain ATCC 33530 / DSM 19775 / NCTC 10195 / G37) (Mycoplasmoides genitalium) protein is Putative ABC transporter ATP-binding protein MG304.